Reading from the N-terminus, the 91-residue chain is Elongation factor 1-beta (91 aa).

It belongs to the EF-1-beta/EF-1-delta family.

In terms of biological role, promotes the exchange of GDP for GTP in EF-1-alpha/GDP, thus allowing the regeneration of EF-1-alpha/GTP that could then be used to form the ternary complex EF-1-alpha/GTP/AAtRNA. This is Elongation factor 1-beta from Saccharolobus islandicus (strain Y.N.15.51 / Yellowstone #2) (Sulfolobus islandicus).